Reading from the N-terminus, the 148-residue chain is Large ribosomal subunit protein bL27m (148 aa).

The N-terminal 30 residues, 1–30 (MAAAALTLRTRAAVTALLSPTAPTALAVRH), are a transit peptide targeting the mitochondrion. Residues 28 to 48 (VRHASKKTGGSSKNLGGKSRG) are disordered.

Belongs to the bacterial ribosomal protein bL27 family. In terms of assembly, component of the mitochondrial ribosome large subunit (39S) which comprises a 16S rRNA and about 50 distinct proteins.

The protein localises to the mitochondrion. The polypeptide is Large ribosomal subunit protein bL27m (Mrpl27) (Mus musculus (Mouse)).